A 540-amino-acid polypeptide reads, in one-letter code: MSNMSQDDVTTGLRTVQQGLEALREEHSTISNTLETSVKGVKEDEAPLPKQKLSQINDNLDKLVCGVDETSLMLMVFQLTQGMDAQHQKYQAQRRRLCQENAWLRDELSSTQIKLQQSEQMVAQLEEENKHLKYMASIKQFDDGTQSDTKTSVDVGPQPVTNETLQELGFGPEDEEDMNASQFNQPTPANQMAASANVGYEIPARLRTLHNLVIQYASQGRYEVAVPLCKQALEDLEKTSGHDHPDVATMLNILALVYRDQNKYKEAANLLNEALSIREKCLGESHPAVAATLNNLAVLFGKRGKFKDAEPLCKRALEIREKVLGDDHPDVAKQLNNLALLCQNQGKYEEVEKYYKRALEIYESKLGPDDPNVAKTKNNLSSAYLKQGKYKEAEELYKQILTRAHEREFGQISGENKPIWQIAEEREENKHKGEGATANEQAGWAKAAKVDSPTVTTTLKNLGALYRRQGKYEAAETLEDVALRAKKQHEPLRSGAMGGIDEMSQSMMASTIGGSRNSMTTSTSQTGLKNKLMNALGFNS.

Residues 34-138 (LETSVKGVKE…NKHLKYMASI (105 aa)) are a coiled coil. TPR repeat units lie at residues 206–239 (LRTL…LEKT), 248–281 (ATML…REKC), 290–323 (AATL…REKV), 332–365 (AKQL…YESK), 374–407 (AKTK…AHER), and 456–489 (TTTL…KKQH).

The protein belongs to the kinesin light chain family. In terms of assembly, oligomeric complex composed of two heavy chains and two light chains. Interacts with unc-83; the interaction is direct. Interacts with unc-33; the interaction regulates unc-33 neurite localization. Interacts with casy-1.

The protein resides in the cytoplasm. It localises to the cytoskeleton. It is found in the nucleus envelope. Functionally, kinesin is a microtubule-associated force-producing protein that may play a role in organelle transport. The light chain may function in coupling of cargo to the heavy chain or in the modulation of its ATPase activity. Recruits unc-83 (within the unc-83-unc-84 LINC complex) to the nuclear envelope during nuclear migration to mediate the link between the nuclear envelope and the microtubule cytoskeleton in hypodermal precursor cells. In Caenorhabditis elegans, this protein is Kinesin light chain.